An 89-amino-acid chain; its full sequence is Large ribosomal subunit protein bL27 (89 aa).

A disordered region spans residues 1 to 21 (MAHKKAGGSSRNGRDSESKRL).

This sequence belongs to the bacterial ribosomal protein bL27 family.

The sequence is that of Large ribosomal subunit protein bL27 from Bartonella quintana (strain Toulouse) (Rochalimaea quintana).